The chain runs to 111 residues: UPF0060 membrane protein NFA_36830 (111 aa).

Helical transmembrane passes span 7–27 (LVLF…VWQG), 33–53 (GLWW…VATF), 62–82 (VLAA…VLVD), and 91–111 (LLGA…PRGG).

Belongs to the UPF0060 family.

It localises to the cell membrane. The sequence is that of UPF0060 membrane protein NFA_36830 from Nocardia farcinica (strain IFM 10152).